The primary structure comprises 144 residues: Large ribosomal subunit protein uL15 (144 aa).

Residues 1–54 (MRLNTLSPAPGRVTSRKRVGRGIGSGLGKTAGRGHKGLKSRSGGTVKPGFEGGQ) form a disordered region. Residues 21–31 (RGIGSGLGKTA) are compositionally biased toward gly residues.

It belongs to the universal ribosomal protein uL15 family. In terms of assembly, part of the 50S ribosomal subunit.

Binds to the 23S rRNA. This is Large ribosomal subunit protein uL15 from Teredinibacter turnerae (strain ATCC 39867 / T7901).